Reading from the N-terminus, the 337-residue chain is UDP-3-O-acylglucosamine N-acyltransferase 1 (337 aa).

The active-site Proton acceptor is the His-238.

The protein belongs to the transferase hexapeptide repeat family. LpxD subfamily. Homotrimer.

The enzyme catalyses a UDP-3-O-[(3R)-3-hydroxyacyl]-alpha-D-glucosamine + a (3R)-hydroxyacyl-[ACP] = a UDP-2-N,3-O-bis[(3R)-3-hydroxyacyl]-alpha-D-glucosamine + holo-[ACP] + H(+). The protein operates within bacterial outer membrane biogenesis; LPS lipid A biosynthesis. In terms of biological role, catalyzes the N-acylation of UDP-3-O-acylglucosamine using 3-hydroxyacyl-ACP as the acyl donor. Is involved in the biosynthesis of lipid A, a phosphorylated glycolipid that anchors the lipopolysaccharide to the outer membrane of the cell. This chain is UDP-3-O-acylglucosamine N-acyltransferase 1, found in Koribacter versatilis (strain Ellin345).